The sequence spans 492 residues: Catalase-1/2 (492 aa).

Residues H65 and N138 contribute to the active site. Y348 is a binding site for heme.

Belongs to the catalase family. As to quaternary structure, homotetramer. Heme is required as a cofactor.

Its subcellular location is the cytoplasm. It is found in the cytosol. The protein resides in the peroxisome matrix. It catalyses the reaction 2 H2O2 = O2 + 2 H2O. In terms of biological role, catalyzes the degradation of hydrogen peroxide (H(2)O(2)) generated by peroxisomal oxidases to water and oxygen, thereby protecting cells from the toxic effects of hydrogen peroxide. This is Catalase-1/2 (CAT1) from Glycine max (Soybean).